We begin with the raw amino-acid sequence, 228 residues long: Cutinase CUT1 (228 aa).

An N-terminal signal peptide occupies residues 1 to 16 (MQFITVALTLIALASA). A disulfide bond links Cys49 and Cys127. Ser138 (nucleophile) is an active-site residue. Cys189 and Cys196 are joined by a disulfide. Asn190 carries an N-linked (GlcNAc...) asparagine glycan. Asp193 is an active-site residue. The Proton donor/acceptor role is filled by His206.

This sequence belongs to the cutinase family. In terms of processing, the 2 disulfide bonds play a critical role in holding the catalytic residues in juxta-position; reduction of the disulfide bridges results in the complete inactivation of the enzyme.

It localises to the secreted. The enzyme catalyses cutin + H2O = cutin monomers.. Its function is as follows. Catalyzes the hydrolysis of complex carboxylic polyesters found in the cell wall of plants. Degrades cutin, a macromolecule that forms the structure of the plant cuticle. Required for efficient penetration of the host plant cuticle by the appressorium during the initial stage of fungal infection. This is Cutinase CUT1 from Pyricularia oryzae (strain 70-15 / ATCC MYA-4617 / FGSC 8958) (Rice blast fungus).